The chain runs to 189 residues: Large ribosomal subunit protein uL10 (189 aa).

This sequence belongs to the universal ribosomal protein uL10 family. In terms of assembly, part of the ribosomal stalk of the 50S ribosomal subunit. The N-terminus interacts with L11 and the large rRNA to form the base of the stalk. The C-terminus forms an elongated spine to which L12 dimers bind in a sequential fashion forming a multimeric L10(L12)X complex.

In terms of biological role, forms part of the ribosomal stalk, playing a central role in the interaction of the ribosome with GTP-bound translation factors. In Rippkaea orientalis (strain PCC 8801 / RF-1) (Cyanothece sp. (strain PCC 8801)), this protein is Large ribosomal subunit protein uL10.